A 494-amino-acid chain; its full sequence is MATEAQSEGEVPARESGRSDAICSFVICNDSSLRGQPIIFNPDFFVEKLRHEKPEIFTELVVSNITRLIDLPGTELAQLMGEVDLKLPGGAGPASGFFRSLMSLKRKEKGVIFGSPLTEEGIAQIYQLIEYLHKNLRVEGLFRVPGNSVRQQILRDALNNGTDIDLESGEFHSNDVATLLKMFLGELPEPLLTHKHFNAHLKIADLMQFDDKGNKTNIPDKDRQIEALQLLFLILPPPNRNLLKLLLDLLYQTAKKQDKNKMSAYNLALMFAPHVLWPKNVTANDLQENITKLNSGMAFMIKHSQKLFKAPAYIRECARLHYLGSRTQASKDDLDLIASCHTKSFQLAKSQKRNRVDSCPHQEETQHHTEEALRELFQHVHDMPESAKKKQLIRQFNKQSLTQTPGREPSTSQVQKRARSRSFSGLIKRKVLGNQMMSEKKKKNPTPESVAIGELKGTSKENRNLLFSGSPAVTMTPTRLKWSEGKKEGKKGFL.

An N-acetylalanine modification is found at alanine 2. 2 positions are modified to phosphoserine: serine 7 and serine 31. One can recognise a Rho-GAP domain in the interval methionine 102–phenylalanine 308. Disordered regions lie at residues lysine 349–histidine 368 and glutamine 399–arginine 421. Positions asparagine 354 to histidine 368 are enriched in basic and acidic residues. Over residues glutamine 399–glutamine 415 the composition is skewed to polar residues. Phosphoserine occurs at positions 422, 438, and 470. The residue at position 478 (threonine 478) is a Phosphothreonine.

Strong expression in fetal heart, brain, placenta, lung, liver, skeletal muscle, kidney and pancreas. Weak expression in adult pancreas, spleen, thymus, and ovary.

It localises to the nucleus. GTPase activator for the Rho-type GTPases by converting them to an inactive GDP-bound state. The protein is Rho GTPase-activating protein 19 (ARHGAP19) of Homo sapiens (Human).